Here is a 218-residue protein sequence, read N- to C-terminus: Large ribosomal subunit protein uL4 (218 aa).

Residues 55–83 (THATKTRGMVSGGGKKPWKQKGTGRARQG) are disordered.

The protein belongs to the universal ribosomal protein uL4 family. In terms of assembly, part of the 50S ribosomal subunit.

Its function is as follows. One of the primary rRNA binding proteins, this protein initially binds near the 5'-end of the 23S rRNA. It is important during the early stages of 50S assembly. It makes multiple contacts with different domains of the 23S rRNA in the assembled 50S subunit and ribosome. Functionally, forms part of the polypeptide exit tunnel. The sequence is that of Large ribosomal subunit protein uL4 from Bifidobacterium longum (strain DJO10A).